The following is a 156-amino-acid chain: Small ribosomal subunit protein uS7 (156 aa).

It belongs to the universal ribosomal protein uS7 family. As to quaternary structure, part of the 30S ribosomal subunit. Contacts proteins S9 and S11.

Functionally, one of the primary rRNA binding proteins, it binds directly to 16S rRNA where it nucleates assembly of the head domain of the 30S subunit. Is located at the subunit interface close to the decoding center, probably blocks exit of the E-site tRNA. This is Small ribosomal subunit protein uS7 from Mycobacterium tuberculosis (strain CDC 1551 / Oshkosh).